The chain runs to 198 residues: Adenylate kinase (198 aa).

10 to 15 (GAGKGT) provides a ligand contact to ATP. The NMP stretch occupies residues 30–59 (STGDMLRAAVQAGSEVGKRAKAVMDAGELV). AMP-binding positions include Thr-31, Arg-36, 57–59 (ELV), 85–88 (GYPR), and Gln-92. Residues 126–142 (KRAEDAKAAGQPVRKDD) form an LID region. Residue Arg-127 coordinates ATP. Residues Arg-139 and Arg-150 each coordinate AMP. Ala-178 contacts ATP.

This sequence belongs to the adenylate kinase family. In terms of assembly, monomer.

It localises to the cytoplasm. It catalyses the reaction AMP + ATP = 2 ADP. Its pathway is purine metabolism; AMP biosynthesis via salvage pathway; AMP from ADP: step 1/1. Catalyzes the reversible transfer of the terminal phosphate group between ATP and AMP. Plays an important role in cellular energy homeostasis and in adenine nucleotide metabolism. This chain is Adenylate kinase, found in Mesorhizobium japonicum (strain LMG 29417 / CECT 9101 / MAFF 303099) (Mesorhizobium loti (strain MAFF 303099)).